The chain runs to 577 residues: Protein downstream neighbor of son homolog (577 aa).

Disordered regions lie at residues 1-67 (MAEL…KRRN) and 328-382 (FTQP…LEEM). Positions 362 to 375 (ETDEVSDESDEDES) are enriched in acidic residues.

It belongs to the DONSON family. In terms of assembly, component of the replisome complex.

It is found in the nucleus. Its function is as follows. Replisome component that maintains genome stability by protecting stalled or damaged replication forks. After the induction of replication stress, required for the stabilization of stalled replication forks, the efficient activation of the intra-S-phase and G/2M cell-cycle checkpoints and the maintenance of genome stability. This is Protein downstream neighbor of son homolog from Xenopus tropicalis (Western clawed frog).